A 52-amino-acid polypeptide reads, in one-letter code: Ornatin-B (52 aa).

The short motif at 42-44 (RGD) is the Cell attachment site element.

Belongs to the ornatin family.

Its subcellular location is the secreted. Functionally, potent inhibitor of fibrinogen interaction with platelet receptors expressed on glycoprotein IIb-IIIa complex. May prevent blood from clotting during either feeding and/or storage of ingested blood. The chain is Ornatin-B from Placobdella ornata (Turtle leech).